A 494-amino-acid polypeptide reads, in one-letter code: Glutamyl-tRNA(Gln) amidotransferase subunit A (494 aa).

Residues Lys-78 and Ser-158 each act as charge relay system in the active site. Catalysis depends on Ser-182, which acts as the Acyl-ester intermediate.

Belongs to the amidase family. GatA subfamily. Heterotrimer of A, B and C subunits.

The catalysed reaction is L-glutamyl-tRNA(Gln) + L-glutamine + ATP + H2O = L-glutaminyl-tRNA(Gln) + L-glutamate + ADP + phosphate + H(+). Its function is as follows. Allows the formation of correctly charged Gln-tRNA(Gln) through the transamidation of misacylated Glu-tRNA(Gln) in organisms which lack glutaminyl-tRNA synthetase. The reaction takes place in the presence of glutamine and ATP through an activated gamma-phospho-Glu-tRNA(Gln). This is Glutamyl-tRNA(Gln) amidotransferase subunit A from Xanthobacter autotrophicus (strain ATCC BAA-1158 / Py2).